We begin with the raw amino-acid sequence, 426 residues long: Casein kinase I (426 aa).

The region spanning 9-278 is the Protein kinase domain; it reads YRISRKIGGG…LRKLLREMFV (270 aa). Residues 15 to 23 and lysine 38 contribute to the ATP site; that span reads IGGGSFGEI. Aspartate 128 (proton acceptor) is an active-site residue. Disordered stretches follow at residues 340 to 360 and 377 to 426; these read TTTTTSSSQPSNVKNISTVSN and PSYN…PPAK. Polar residues predominate over residues 345–360; the sequence is SSSQPSNVKNISTVSN. The segment covering 386 to 404 has biased composition (low complexity); sequence QSPQQTTTTTSSSNPNQTT. A compositionally biased stretch (polar residues) spans 414–426; that stretch reads PQSSSTTTKPPAK.

This sequence belongs to the protein kinase superfamily. CK1 Ser/Thr protein kinase family. Casein kinase I subfamily. Monomer. Autophosphorylated.

It localises to the cytoplasm. Its subcellular location is the nucleus. The catalysed reaction is L-seryl-[protein] + ATP = O-phospho-L-seryl-[protein] + ADP + H(+). The enzyme catalyses L-threonyl-[protein] + ATP = O-phospho-L-threonyl-[protein] + ADP + H(+). Functionally, casein kinases are operationally defined by their preferential utilization of acidic proteins such as caseins as substrates. Can phosphorylate a large number of proteins. May have a role in DNA repair mechanism and support vegetative growth of the cells. This is Casein kinase I (cak1-1) from Dictyostelium discoideum (Social amoeba).